Here is a 455-residue protein sequence, read N- to C-terminus: GTPase Der (455 aa).

2 EngA-type G domains span residues 3–167 (FTIA…PEPA) and 184–359 (IRVA…AVWN). GTP-binding positions include 9–16 (GRPNVGKS), 56–60 (DTAGL), 119–122 (NKSE), 190–197 (GRPNAGKS), 237–241 (DTAGL), and 302–305 (NKWD). Residues 360–444 (RRVATALLNR…PIRITLREKA (85 aa)) form the KH-like domain.

Belongs to the TRAFAC class TrmE-Era-EngA-EngB-Septin-like GTPase superfamily. EngA (Der) GTPase family. As to quaternary structure, associates with the 50S ribosomal subunit.

Its function is as follows. GTPase that plays an essential role in the late steps of ribosome biogenesis. The sequence is that of GTPase Der from Nitrobacter winogradskyi (strain ATCC 25391 / DSM 10237 / CIP 104748 / NCIMB 11846 / Nb-255).